The primary structure comprises 343 residues: 4-hydroxy-2-oxovalerate aldolase 2 (343 aa).

In terms of domain architecture, Pyruvate carboxyltransferase spans 5–255 (ITIVDTTLRD…DTGVDLFPLI (251 aa)). Substrate is bound by residues 13–14 (RD), S167, and H194. A Mn(2+)-binding site is contributed by D14. Positions 194 and 196 each coordinate Mn(2+). Residue Y285 participates in substrate binding.

Belongs to the 4-hydroxy-2-oxovalerate aldolase family.

The catalysed reaction is (S)-4-hydroxy-2-oxopentanoate = acetaldehyde + pyruvate. The chain is 4-hydroxy-2-oxovalerate aldolase 2 from Rhodococcus jostii (strain RHA1).